The sequence spans 130 residues: Phosphoribosyl-AMP cyclohydrolase (130 aa).

Asp78 is a Mg(2+) binding site. Cys79 contributes to the Zn(2+) binding site. 2 residues coordinate Mg(2+): Asp80 and Asp82. 2 residues coordinate Zn(2+): Cys96 and Cys103.

This sequence belongs to the PRA-CH family. In terms of assembly, homodimer. It depends on Mg(2+) as a cofactor. Requires Zn(2+) as cofactor.

The protein resides in the cytoplasm. It carries out the reaction 1-(5-phospho-beta-D-ribosyl)-5'-AMP + H2O = 1-(5-phospho-beta-D-ribosyl)-5-[(5-phospho-beta-D-ribosylamino)methylideneamino]imidazole-4-carboxamide. It participates in amino-acid biosynthesis; L-histidine biosynthesis; L-histidine from 5-phospho-alpha-D-ribose 1-diphosphate: step 3/9. In terms of biological role, catalyzes the hydrolysis of the adenine ring of phosphoribosyl-AMP. The chain is Phosphoribosyl-AMP cyclohydrolase from Methylobacillus flagellatus (strain ATCC 51484 / DSM 6875 / VKM B-1610 / KT).